The sequence spans 177 residues: Ribosome maturation factor RimM (177 aa).

The PRC barrel domain maps to 98 to 177 (GEEFYWRELY…RIEVDWDPGF (80 aa)).

This sequence belongs to the RimM family. Binds ribosomal protein uS19.

It localises to the cytoplasm. Functionally, an accessory protein needed during the final step in the assembly of 30S ribosomal subunit, possibly for assembly of the head region. Essential for efficient processing of 16S rRNA. May be needed both before and after RbfA during the maturation of 16S rRNA. It has affinity for free ribosomal 30S subunits but not for 70S ribosomes. The chain is Ribosome maturation factor RimM from Photobacterium profundum (strain SS9).